We begin with the raw amino-acid sequence, 919 residues long: Exostosin-like 3 (919 aa).

Topologically, residues 1–30 are cytoplasmic; it reads MTGYTMLRNGGAGNGGQTCMLRWSNRIRLT. A required for interaction with REG3A region spans residues 1-140; it reads MTGYTMLRNG…LKNVISQTEH (140 aa). The chain crosses the membrane as a helical; Signal-anchor for type II membrane protein span at residues 31-51; the sequence is WLSFTLFVILVFFPLIAHYYL. The Lumenal segment spans residues 52 to 919; that stretch reads TTLDEADEAG…HDKTKCFKFI (868 aa). Intrachain disulfides connect cysteine 177/cysteine 182 and cysteine 188/cysteine 236. N-linked (GlcNAc...) asparagine glycosylation occurs at asparagine 290. The residue at position 362 (serine 362) is a Phosphoserine. Cysteine 400 and cysteine 415 are joined by a disulfide. Asparagine 592 is a glycosylation site (N-linked (GlcNAc...) asparagine). UDP-N-acetyl-alpha-D-glucosamine-binding residues include leucine 668, arginine 672, asparagine 697, asparagine 723, arginine 728, aspartate 744, aspartate 745, and aspartate 746. Aspartate 746 serves as a coordination point for Mn(2+). An N-linked (GlcNAc...) asparagine glycan is attached at asparagine 790. Cysteine 831 and cysteine 879 are disulfide-bonded. Positions 832, 833, and 876 each coordinate UDP-N-acetyl-alpha-D-glucosamine. Aspartate 833 is an active-site residue.

It belongs to the glycosyltransferase 47 family. Homodimer; disulfide-linked. Interacts with REG3A. Mn(2+) serves as cofactor. In terms of tissue distribution, ubiquitous. Expressed in keratinocytes. Expressed in pancreas.

Its subcellular location is the endoplasmic reticulum membrane. The protein resides in the golgi apparatus. It localises to the cell membrane. The protein localises to the nucleus. The enzyme catalyses 3-O-(beta-D-GlcA-(1-&gt;3)-beta-D-Gal-(1-&gt;3)-beta-D-Gal-(1-&gt;4)-beta-D-Xyl)-L-seryl-[protein] + UDP-N-acetyl-alpha-D-glucosamine = 3-O-(alpha-D-GlcNAc-(1-&gt;4)-beta-D-GlcA-(1-&gt;3)-beta-D-Gal-(1-&gt;3)-beta-D-Gal-(1-&gt;4)-beta-D-Xyl)-L-seryl-[protein] + UDP + H(+). It participates in glycan metabolism; heparan sulfate biosynthesis. Glycosyltransferase which regulates the biosynthesis of heparan sulfate (HS). Initiates HS synthesis by transferring the first N-acetyl-alpha-D-glucosamine (alpha-GlcNAc) residue (GlcNAcT-I activity) to the tetrasaccharide linker (GlcA-Gal-Gal-Xyl-)Ser core linker. May also transfer alpha-GlcNAc residues during HS elongation (GlcNAcT-II activity). Lacks glucuronyl transferase II (GlcAT-II) activity. Important for both skeletal development and hematopoiesis, through the formation of HS proteoglycans (HSPGs). Through the synthesis of HS, regulates postnatal pancreatic islet maturation and insulin secretion. Functionally, receptor for REG3A, REG3B and REG3G, induces the activation of downstream signaling pathways such as PI3K-AKT or RAS-RAF-MEK-ERK signaling pathway. Required for the function of REG3A in regulating keratinocyte proliferation and differentiation. Required for the inhibition of skin inflammation mediated by REG3A through the activation of PI3K-AKT-STAT3 pathway. Required for the function of REG3A and REG3G in glucose tolerance in pancreas. Expressed in microglia, is activated by nociceptor-derived REG3G in response to endotoxins, leading to the inhibition of kynurenine pathway to prevent endotoxic death. The protein is Exostosin-like 3 of Homo sapiens (Human).